We begin with the raw amino-acid sequence, 967 residues long: Sodium/potassium exporting P-type ATPase 1 (967 aa).

The Cytoplasmic portion of the chain corresponds to 1–70 (MEGSGDKRHE…GVNPWKILLR (70 aa)). A helical membrane pass occupies residues 71–91 (QVSNGLTAVLVVAMVVSFAVK). Residue aspartate 92 is a topological domain, extracellular. Residues 93–113 (YAEAGVLVIVIAFNTIVGFVQ) form a helical membrane-spanning segment. Over 114 to 254 (EYRAEKTMDA…TQSTPMQRKL (141 aa)) the chain is Cytoplasmic. Residues 255 to 275 (NLMAYMLLAFALLLALIVFAV) form a helical membrane-spanning segment. At 276 to 283 (NKFNFSTE) the chain is on the extracellular side. Asparagine 279 is a glycosylation site (N-linked (GlcNAc...) asparagine). The helical transmembrane segment at 284 to 304 (VVIYAIALSIAIIPEGLIAVI) threads the bilayer. At 305–732 (TIVQALGVRR…GRRIFSNIKK (428 aa)) the chain is on the cytoplasmic side. Aspartate 340 acts as the 4-aspartylphosphate intermediate in catalysis. Positions 340 and 342 each coordinate Mg(2+). The ATP site is built by threonine 342, glutamate 425, lysine 478, arginine 523, threonine 587, glycine 588, aspartate 589, arginine 651, and lysine 657. Aspartate 676 serves as a coordination point for Mg(2+). Asparagine 679 is an ATP binding site. Residues 733-753 (FVLHLLSTNVGQVIVLLIGLA) form a helical membrane-spanning segment. Residues 754-812 (FKDRTGTSVFPLSPVQILFLNLVTGTPPAMALGIEPASSSVMQVPPHVKGLFTVELIMD) lie on the Extracellular side of the membrane. Residues 813 to 833 (IFIFGTFIGILALASWVLVIY) form a helical membrane-spanning segment. At 834-900 (PFGNSDLATL…GGASRFFSNK (67 aa)) the chain is on the cytoplasmic side. The chain crosses the membrane as a helical span at residues 901 to 921 (VLVASVFIGALLPIPTIYIGT). Over 922–931 (LNTEVFKQEG) the chain is Extracellular. The helical transmembrane segment at 932 to 952 (ITWEWIIVIVSVFVFFLLSEF) threads the bilayer. At 953 to 967 (YKLLKRRFIKTPYNM) the chain is on the cytoplasmic side.

The protein belongs to the cation transport ATPase (P-type) (TC 3.A.3) family. Type IID subfamily. Mg(2+) serves as cofactor. In terms of processing, the active site is phosphorylated in presence of sodium or potassium and in conditions of higher pH. Not phosphorylated in presence of calcium ions.

It localises to the cell membrane. It carries out the reaction Na(+)(in) + ATP + H2O = Na(+)(out) + ADP + phosphate + H(+). It catalyses the reaction K(+)(in) + ATP + H2O = K(+)(out) + ADP + phosphate + H(+). Its function is as follows. Catalyzes the hydrolysis of ATP coupled with the export of sodium and potassium from the cell. May pump potassium inefficiently. May transport other cations such as lithium. Sodium/potassium efflux ATPases are involved in salt tolerance and maintaining the membrane potential across the plasma membrane in high salinity (Na+) or alkaline (K+) environments. The sequence is that of Sodium/potassium exporting P-type ATPase 1 from Physcomitrium patens (Spreading-leaved earth moss).